The following is a 392-amino-acid chain: Branched-chain-amino-acid aminotransferase, mitochondrial (392 aa).

The transit peptide at methionine 1 to tyrosine 27 directs the protein to the mitochondrion. Tyrosine 168 is a substrate binding site. An N6-(pyridoxal phosphate)lysine modification is found at lysine 229. Residue lysine 321 is modified to N6-acetyllysine.

This sequence belongs to the class-IV pyridoxal-phosphate-dependent aminotransferase family. In terms of assembly, homodimer. It depends on pyridoxal 5'-phosphate as a cofactor. Ubiquitous.

It localises to the mitochondrion. It carries out the reaction L-leucine + 2-oxoglutarate = 4-methyl-2-oxopentanoate + L-glutamate. The enzyme catalyses L-isoleucine + 2-oxoglutarate = (S)-3-methyl-2-oxopentanoate + L-glutamate. It catalyses the reaction L-valine + 2-oxoglutarate = 3-methyl-2-oxobutanoate + L-glutamate. Functionally, catalyzes the first reaction in the catabolism of the essential branched chain amino acids leucine, isoleucine, and valine. May also function as a transporter of branched chain alpha-keto acids. The protein is Branched-chain-amino-acid aminotransferase, mitochondrial (BCAT2) of Homo sapiens (Human).